The primary structure comprises 163 residues: 3-hydroxyacyl-[acyl-carrier-protein] dehydratase FabZ (163 aa).

His-61 is a catalytic residue.

It belongs to the thioester dehydratase family. FabZ subfamily.

The protein localises to the cytoplasm. It catalyses the reaction a (3R)-hydroxyacyl-[ACP] = a (2E)-enoyl-[ACP] + H2O. In terms of biological role, involved in unsaturated fatty acids biosynthesis. Catalyzes the dehydration of short chain beta-hydroxyacyl-ACPs and long chain saturated and unsaturated beta-hydroxyacyl-ACPs. The sequence is that of 3-hydroxyacyl-[acyl-carrier-protein] dehydratase FabZ from Dinoroseobacter shibae (strain DSM 16493 / NCIMB 14021 / DFL 12).